A 256-amino-acid chain; its full sequence is Type III pantothenate kinase (256 aa).

An ATP-binding site is contributed by Asp6–Lys13. Substrate contacts are provided by residues Tyr90 and Gly97–Arg100. Asp99 functions as the Proton acceptor in the catalytic mechanism. Thr123 is an ATP binding site. Thr187 lines the substrate pocket.

It belongs to the type III pantothenate kinase family. Homodimer. NH4(+) serves as cofactor. The cofactor is K(+).

The protein localises to the cytoplasm. The enzyme catalyses (R)-pantothenate + ATP = (R)-4'-phosphopantothenate + ADP + H(+). It functions in the pathway cofactor biosynthesis; coenzyme A biosynthesis; CoA from (R)-pantothenate: step 1/5. Its function is as follows. Catalyzes the phosphorylation of pantothenate (Pan), the first step in CoA biosynthesis. This Burkholderia mallei (strain NCTC 10247) protein is Type III pantothenate kinase.